A 704-amino-acid chain; its full sequence is Elongation factor G (704 aa).

Residues 10–290 enclose the tr-type G domain; sequence KKVRNIGIMA…AVVDYLPSPL (281 aa). Residues 19–26, 83–87, and 137–140 contribute to the GTP site; these read AHIDAGKT, DTPGH, and NKMD.

The protein belongs to the TRAFAC class translation factor GTPase superfamily. Classic translation factor GTPase family. EF-G/EF-2 subfamily.

The protein resides in the cytoplasm. Functionally, catalyzes the GTP-dependent ribosomal translocation step during translation elongation. During this step, the ribosome changes from the pre-translocational (PRE) to the post-translocational (POST) state as the newly formed A-site-bound peptidyl-tRNA and P-site-bound deacylated tRNA move to the P and E sites, respectively. Catalyzes the coordinated movement of the two tRNA molecules, the mRNA and conformational changes in the ribosome. This Kocuria rhizophila (strain ATCC 9341 / DSM 348 / NBRC 103217 / DC2201) protein is Elongation factor G.